Reading from the N-terminus, the 167-residue chain is Large ribosomal subunit protein uL10 (167 aa).

This sequence belongs to the universal ribosomal protein uL10 family. As to quaternary structure, part of the ribosomal stalk of the 50S ribosomal subunit. The N-terminus interacts with L11 and the large rRNA to form the base of the stalk. The C-terminus forms an elongated spine to which L12 dimers bind in a sequential fashion forming a multimeric L10(L12)X complex.

Forms part of the ribosomal stalk, playing a central role in the interaction of the ribosome with GTP-bound translation factors. The protein is Large ribosomal subunit protein uL10 of Ligilactobacillus salivarius (strain UCC118) (Lactobacillus salivarius).